We begin with the raw amino-acid sequence, 444 residues long: Tol-Pal system protein TolB (444 aa).

An N-terminal signal peptide occupies residues 1–26 (MNLFRSLAPMGLALALLLPAAAPALA). The span at 287 to 310 (ASGTRRQLTNSPSIETAPSYSPDG) shows a compositional bias: polar residues. The interval 287-311 (ASGTRRQLTNSPSIETAPSYSPDGS) is disordered.

It belongs to the TolB family. In terms of assembly, the Tol-Pal system is composed of five core proteins: the inner membrane proteins TolA, TolQ and TolR, the periplasmic protein TolB and the outer membrane protein Pal. They form a network linking the inner and outer membranes and the peptidoglycan layer.

It localises to the periplasm. Functionally, part of the Tol-Pal system, which plays a role in outer membrane invagination during cell division and is important for maintaining outer membrane integrity. This is Tol-Pal system protein TolB from Cereibacter sphaeroides (strain ATCC 17025 / ATH 2.4.3) (Rhodobacter sphaeroides).